The following is a 142-amino-acid chain: Small heat shock protein IbpB (142 aa).

The sHSP domain maps to 26–137; sequence AGEGQSFPPY…AAQRIAISER (112 aa).

It belongs to the small heat shock protein (HSP20) family. As to quaternary structure, homodimer. Forms homomultimers of about 100-150 subunits at optimal growth temperatures. Conformation changes to oligomers at high temperatures or high ionic concentrations. The decrease in size of the multimers is accompanied by an increase in chaperone activity.

The protein localises to the cytoplasm. In terms of biological role, associates with aggregated proteins, together with IbpA, to stabilize and protect them from irreversible denaturation and extensive proteolysis during heat shock and oxidative stress. Aggregated proteins bound to the IbpAB complex are more efficiently refolded and reactivated by the ATP-dependent chaperone systems ClpB and DnaK/DnaJ/GrpE. Its activity is ATP-independent. The sequence is that of Small heat shock protein IbpB from Shigella boydii serotype 18 (strain CDC 3083-94 / BS512).